The following is a 499-amino-acid chain: E3 ubiquitin-protein ligase TRIM69 (499 aa).

A necessary for nuclear localization region spans residues 1–152 (MEVSSRPPSN…SMGQSKDFLQ (152 aa)). The RING-type zinc-finger motif lies at 41–82 (CPLCNDWFRDPLMLTCGHNFCQACIQNYWKMQAKETFCPECK). A coiled-coil region spans residues 160–265 (FTEELAIYQS…NIQARMEQQN (106 aa)). One can recognise a B30.2/SPRY domain in the interval 305–499 (PIQYTIWREM…KEPLHIVHPQ (195 aa)). Serine 341 is subject to Phosphoserine.

It belongs to the TRIM/RBCC family. In terms of assembly, homo-multimer; required for antiviral activity. Interacts with PML. Post-translationally, phosphorylated. Phosphorylation is necessary for nuclear localization.

The protein resides in the cytoplasm. Its subcellular location is the nucleus. The protein localises to the nucleus speckle. It localises to the cytoskeleton. It is found in the microtubule organizing center. The protein resides in the centrosome. It catalyses the reaction S-ubiquitinyl-[E2 ubiquitin-conjugating enzyme]-L-cysteine + [acceptor protein]-L-lysine = [E2 ubiquitin-conjugating enzyme]-L-cysteine + N(6)-ubiquitinyl-[acceptor protein]-L-lysine.. The protein operates within protein modification; protein ubiquitination. In terms of biological role, E3 ubiquitin ligase that plays an important role in antiviral immunity by restricting different viral infections including dengue virus or vesicular stomatitis indiana virus. Ubiquitinates viral proteins such as dengue virus NS3 thereby limiting infection. In addition, acts as a key mediator of type I interferon induced microtubule stabilization by directly associating to microtubules independently of its E3 ligase activity. Also plays a role in cataract formation together with TP53. Mechanistically, inhibits UVB-induced cell apoptosis and reactive oxygen species (ROS) production by inducing TP53 ubiquitination. Regulates centrosome dynamics and mitotic progression by ubiquitinating STK3/MST2; leading to its redistribution to the perinuclear cytoskeleton and subsequent phosphorylation by PLK1. The polypeptide is E3 ubiquitin-protein ligase TRIM69 (Trim69) (Rattus norvegicus (Rat)).